Here is a 207-residue protein sequence, read N- to C-terminus: FMN-dependent NADH:quinone oxidoreductase (207 aa).

Residues S10, 16–18 (SIS), 96–99 (MYNL), and 141–144 (SRGG) each bind FMN.

The protein belongs to the azoreductase type 1 family. As to quaternary structure, homodimer. It depends on FMN as a cofactor.

The enzyme catalyses 2 a quinone + NADH + H(+) = 2 a 1,4-benzosemiquinone + NAD(+). The catalysed reaction is N,N-dimethyl-1,4-phenylenediamine + anthranilate + 2 NAD(+) = 2-(4-dimethylaminophenyl)diazenylbenzoate + 2 NADH + 2 H(+). Quinone reductase that provides resistance to thiol-specific stress caused by electrophilic quinones. In terms of biological role, also exhibits azoreductase activity. Catalyzes the reductive cleavage of the azo bond in aromatic azo compounds to the corresponding amines. In Nostoc sp. (strain PCC 7120 / SAG 25.82 / UTEX 2576), this protein is FMN-dependent NADH:quinone oxidoreductase.